The chain runs to 455 residues: Bifunctional protein GlmU (455 aa).

Positions M1–R230 are pyrophosphorylase. Residues L9–G12, K23, Q73, and G78–T79 contribute to the UDP-N-acetyl-alpha-D-glucosamine site. D103 is a binding site for Mg(2+). The UDP-N-acetyl-alpha-D-glucosamine site is built by G140, E155, N170, and N228. N228 is a binding site for Mg(2+). The segment at V231 to K251 is linker. The interval G252–N455 is N-acetyltransferase. 2 residues coordinate UDP-N-acetyl-alpha-D-glucosamine: R333 and K351. H363 functions as the Proton acceptor in the catalytic mechanism. UDP-N-acetyl-alpha-D-glucosamine is bound by residues Y366 and N377. Acetyl-CoA-binding positions include N386–Y387, A423, and R440.

This sequence in the N-terminal section; belongs to the N-acetylglucosamine-1-phosphate uridyltransferase family. The protein in the C-terminal section; belongs to the transferase hexapeptide repeat family. In terms of assembly, homotrimer. Requires Mg(2+) as cofactor.

It is found in the cytoplasm. It carries out the reaction alpha-D-glucosamine 1-phosphate + acetyl-CoA = N-acetyl-alpha-D-glucosamine 1-phosphate + CoA + H(+). The enzyme catalyses N-acetyl-alpha-D-glucosamine 1-phosphate + UTP + H(+) = UDP-N-acetyl-alpha-D-glucosamine + diphosphate. The protein operates within nucleotide-sugar biosynthesis; UDP-N-acetyl-alpha-D-glucosamine biosynthesis; N-acetyl-alpha-D-glucosamine 1-phosphate from alpha-D-glucosamine 6-phosphate (route II): step 2/2. Its pathway is nucleotide-sugar biosynthesis; UDP-N-acetyl-alpha-D-glucosamine biosynthesis; UDP-N-acetyl-alpha-D-glucosamine from N-acetyl-alpha-D-glucosamine 1-phosphate: step 1/1. It participates in bacterial outer membrane biogenesis; LPS lipid A biosynthesis. Its function is as follows. Catalyzes the last two sequential reactions in the de novo biosynthetic pathway for UDP-N-acetylglucosamine (UDP-GlcNAc). The C-terminal domain catalyzes the transfer of acetyl group from acetyl coenzyme A to glucosamine-1-phosphate (GlcN-1-P) to produce N-acetylglucosamine-1-phosphate (GlcNAc-1-P), which is converted into UDP-GlcNAc by the transfer of uridine 5-monophosphate (from uridine 5-triphosphate), a reaction catalyzed by the N-terminal domain. In Halalkalibacterium halodurans (strain ATCC BAA-125 / DSM 18197 / FERM 7344 / JCM 9153 / C-125) (Bacillus halodurans), this protein is Bifunctional protein GlmU.